The sequence spans 1298 residues: Ras guanine nucleotide exchange factor Q (1298 aa).

Disordered regions lie at residues 1-26 (MDINNNIDNITNSNNNIEKNNNINNF), 46-88 (NNNI…SIEG), 211-271 (NISN…GPLK), 314-384 (YTPP…QQQQ), and 459-533 (LSNG…STTT). Low complexity-rich tracts occupy residues 211–245 (NISNNNNNNNNNSNNSNNNNNMSSSDNNNNSNSNN) and 315–384 (TPPS…QQQQ). Residues 352–389 (SSLNANNNTNNNNQQLQQQQQQQQQQQLQQQQQLTKSY) are a coiled coil. Residues 473 to 482 (LHLSTESTTS) show a composition bias toward polar residues. 2 stretches are compositionally biased toward low complexity: residues 483-501 (NNNNNNNNNNNNNNNNNNN) and 508-533 (TTNSATTTTTTTTTTTTTTTTNSTTT). The region spanning 550–689 (DKDEVIAGER…YLKKAINDSG (140 aa)) is the N-terminal Ras-GEF domain. The DEP domain maps to 723–801 (MSQSLQLKER…SSSSTTTTTT (79 aa)). Disordered regions lie at residues 781–864 (SKSG…PNSI) and 884–920 (GIANGSSTPSIPSSVTSPLTNSKSTLNSTPSSSSNSF). A compositionally biased stretch (low complexity) spans 783-864 (SGSSFSPSSS…ITSTSLPNSI (82 aa)). Positions 964 to 1193 (HPVEIARQLT…YKASHMIEQP (230 aa)) constitute a Ras-GEF domain. The interval 1214–1267 (TTTTTNNLNNNNNNNNPNNNNNNNNNSANNKSSPSPSPSSSPITSSPISSLTIN) is disordered.

Promotes the exchange of Ras-bound GDP by GTP. Seems to play a role in chemotaxis. This is Ras guanine nucleotide exchange factor Q (gefQ) from Dictyostelium discoideum (Social amoeba).